A 399-amino-acid polypeptide reads, in one-letter code: Formate-dependent phosphoribosylglycinamide formyltransferase (399 aa).

N(1)-(5-phospho-beta-D-ribosyl)glycinamide-binding positions include 8–9 (EL) and E68. ATP-binding positions include R100, K141, 146–151 (SSGHGQ), 185–188 (EALA), and E193. The region spanning 105 to 308 (VLAHEELGLP…EFALHARAIL (204 aa)) is the ATP-grasp domain. Mg(2+) contacts are provided by E266 and E279. N(1)-(5-phospho-beta-D-ribosyl)glycinamide contacts are provided by residues D286, K361, and 368 to 369 (RR).

Belongs to the PurK/PurT family. As to quaternary structure, homodimer.

It carries out the reaction N(1)-(5-phospho-beta-D-ribosyl)glycinamide + formate + ATP = N(2)-formyl-N(1)-(5-phospho-beta-D-ribosyl)glycinamide + ADP + phosphate + H(+). The protein operates within purine metabolism; IMP biosynthesis via de novo pathway; N(2)-formyl-N(1)-(5-phospho-D-ribosyl)glycinamide from N(1)-(5-phospho-D-ribosyl)glycinamide (formate route): step 1/1. Functionally, involved in the de novo purine biosynthesis. Catalyzes the transfer of formate to 5-phospho-ribosyl-glycinamide (GAR), producing 5-phospho-ribosyl-N-formylglycinamide (FGAR). Formate is provided by PurU via hydrolysis of 10-formyl-tetrahydrofolate. This Bifidobacterium adolescentis (strain ATCC 15703 / DSM 20083 / NCTC 11814 / E194a) protein is Formate-dependent phosphoribosylglycinamide formyltransferase.